The chain runs to 406 residues: MGIPLPKPVMTQLQERYGNAIFRCGSNCVNGYRETMEDAHLTYLTDSWGFFGVFDGHVNDQCSQYLERAWRSAIEKESIPMTDERMKELALRIDQEWMDSGREGGSTGTFFVALKEGNKVHLQVGNVGDSRVVACIDGVCVPLTEDHKPNNEGERQRIENCAGRVENNRVDGSLAVSRAFGDREYKLGSGSQLEQKVIALADVQHKDFTFDSNDFVLLCCDGVFEGNFPNEEVVAYVKQQLETCNDLAEVAGRVCEEAIERGSRDNISCMIVQFKDGSDYAAEPHTTVVPGPFSAPRNSGFRKAYESMADKGNTTVGALLERRYDTLKAAEALTPEETEELSQFENGPEAKLTGAERQKWFSNYFQKLCEAASNGPSDQMERLQSLQQQAGIPLSILLSLMGEQTQ.

The region spanning 23–274 (RCGSNCVNGY…DNISCMIVQF (252 aa)) is the PPM-type phosphatase domain. The Mn(2+) site is built by D55, G56, D221, and D265.

Belongs to the PP2C family. Monomer. The cofactor is Mg(2+). Requires Mn(2+) as cofactor.

The enzyme catalyses O-phospho-L-seryl-[protein] + H2O = L-seryl-[protein] + phosphate. It catalyses the reaction O-phospho-L-threonyl-[protein] + H2O = L-threonyl-[protein] + phosphate. Functionally, enzyme with a broad specificity. This is Protein phosphatase 2C from Leishmania chagasi.